A 438-amino-acid chain; its full sequence is Adenosylhomocysteinase (438 aa).

Residues Thr-64, Asp-139, and Glu-164 each coordinate substrate. 165 to 167 (TTT) serves as a coordination point for NAD(+). Positions 194 and 198 each coordinate substrate. NAD(+) is bound by residues Asn-199, 228–233 (GYGDVG), Glu-251, Asn-286, 307–309 (IGH), and Asn-352.

The protein belongs to the adenosylhomocysteinase family. The cofactor is NAD(+).

It is found in the cytoplasm. The enzyme catalyses S-adenosyl-L-homocysteine + H2O = L-homocysteine + adenosine. The protein operates within amino-acid biosynthesis; L-homocysteine biosynthesis; L-homocysteine from S-adenosyl-L-homocysteine: step 1/1. May play a key role in the regulation of the intracellular concentration of adenosylhomocysteine. The polypeptide is Adenosylhomocysteinase (Coxiella burnetii (strain RSA 493 / Nine Mile phase I)).